The sequence spans 481 residues: Glycogen synthase (481 aa).

K15 is a binding site for ADP-alpha-D-glucose.

It belongs to the glycosyltransferase 1 family. Bacterial/plant glycogen synthase subfamily.

It catalyses the reaction [(1-&gt;4)-alpha-D-glucosyl](n) + ADP-alpha-D-glucose = [(1-&gt;4)-alpha-D-glucosyl](n+1) + ADP + H(+). The protein operates within glycan biosynthesis; glycogen biosynthesis. Its function is as follows. Synthesizes alpha-1,4-glucan chains using ADP-glucose. The chain is Glycogen synthase from Thermosipho melanesiensis (strain DSM 12029 / CIP 104789 / BI429).